The sequence spans 145 residues: D-aminoacyl-tRNA deacylase (145 aa).

The Gly-cisPro motif, important for rejection of L-amino acids motif lies at 137–138; sequence GP.

Belongs to the DTD family. Homodimer.

Its subcellular location is the cytoplasm. The catalysed reaction is glycyl-tRNA(Ala) + H2O = tRNA(Ala) + glycine + H(+). It carries out the reaction a D-aminoacyl-tRNA + H2O = a tRNA + a D-alpha-amino acid + H(+). In terms of biological role, an aminoacyl-tRNA editing enzyme that deacylates mischarged D-aminoacyl-tRNAs. Also deacylates mischarged glycyl-tRNA(Ala), protecting cells against glycine mischarging by AlaRS. Acts via tRNA-based rather than protein-based catalysis; rejects L-amino acids rather than detecting D-amino acids in the active site. By recycling D-aminoacyl-tRNA to D-amino acids and free tRNA molecules, this enzyme counteracts the toxicity associated with the formation of D-aminoacyl-tRNA entities in vivo and helps enforce protein L-homochirality. The polypeptide is D-aminoacyl-tRNA deacylase (Pseudomonas syringae pv. syringae (strain B728a)).